The following is a 318-amino-acid chain: Acetyl-coenzyme A carboxylase carboxyl transferase subunit alpha (318 aa).

Residues 31 to 292 (DLIKEVSALE…KDAILRQLEL (262 aa)) form the CoA carboxyltransferase C-terminal domain.

Belongs to the AccA family. As to quaternary structure, acetyl-CoA carboxylase is a heterohexamer composed of biotin carboxyl carrier protein (AccB), biotin carboxylase (AccC) and two subunits each of ACCase subunit alpha (AccA) and ACCase subunit beta (AccD).

Its subcellular location is the cytoplasm. The catalysed reaction is N(6)-carboxybiotinyl-L-lysyl-[protein] + acetyl-CoA = N(6)-biotinyl-L-lysyl-[protein] + malonyl-CoA. It participates in lipid metabolism; malonyl-CoA biosynthesis; malonyl-CoA from acetyl-CoA: step 1/1. Its function is as follows. Component of the acetyl coenzyme A carboxylase (ACC) complex. First, biotin carboxylase catalyzes the carboxylation of biotin on its carrier protein (BCCP) and then the CO(2) group is transferred by the carboxyltransferase to acetyl-CoA to form malonyl-CoA. The sequence is that of Acetyl-coenzyme A carboxylase carboxyl transferase subunit alpha from Hydrogenovibrio crunogenus (strain DSM 25203 / XCL-2) (Thiomicrospira crunogena).